The sequence spans 364 residues: TD and POZ domain-containing protein 2 (364 aa).

Positions 19-149 (EFCYEWTISN…KDKLTLCCKV (131 aa)) constitute an MATH domain. The BTB domain occupies 188-255 (TDCSLLVAGH…IYTGKAPTLH (68 aa)).

Belongs to the Tdpoz family.

The chain is TD and POZ domain-containing protein 2 from Mus musculus (Mouse).